Reading from the N-terminus, the 238-residue chain is LexA repressor (238 aa).

Positions 26-46 form a DNA-binding region, H-T-H motif; the sequence is FDEMKDALDLASKSGIHRLIT. Residues S158 and K196 each act as for autocatalytic cleavage activity in the active site.

Belongs to the peptidase S24 family. Homodimer.

The catalysed reaction is Hydrolysis of Ala-|-Gly bond in repressor LexA.. Functionally, represses a number of genes involved in the response to DNA damage (SOS response), including recA and lexA. In the presence of single-stranded DNA, RecA interacts with LexA causing an autocatalytic cleavage which disrupts the DNA-binding part of LexA, leading to derepression of the SOS regulon and eventually DNA repair. This chain is LexA repressor, found in Rhizobium meliloti (strain 1021) (Ensifer meliloti).